The primary structure comprises 376 residues: Transcription initiation factor IIA subunit 1 (376 aa).

N-acetylalanine is present on A2. Low complexity-rich tracts occupy residues 69–79 (QVQQQHQPQQQ) and 89–105 (QAQPQQTVPQQAQTQQV). Disordered stretches follow at residues 69-107 (QVQQQHQPQQQQHHHHHHHQQAQPQQTVPQQAQTQQVLI), 246-265 (AQAQITATGHQQPQAQPAQT), and 274-329 (DGTG…QELF). Phosphoserine; by TAF1 occurs at positions 280, 281, 316, and 321. Residues 280–329 (SSEEDEDEEEDYDDDEEEDKEKDGAEDGQVEEEPLNSEDDVSDEEGQELF) show a composition bias toward acidic residues. DNA is bound by residues H343 and R344.

It belongs to the TFIIA subunit 1 family. TFIIA is a heterodimer of the large unprocessed subunit 1 and a small subunit gamma. It was originally believed to be a heterotrimer of an alpha (p35), a beta (p19) and a gamma subunit (p12). TFIIA forms a complex with TBP. Part of TBP-based Pol II pre-initiation complex (PIC), in which Pol II core assembles with general transcription factors and other specific initiation factors including GTF2E1, GTF2E2, GTF2F1, GTF2F2, TCEA1, ERCC2, ERCC3, GTF2H2, GTF2H3, GTF2H4, GTF2H5, GTF2A1, GTF2A2, GTF2B and TBP; this large multi-subunit PIC complex mediates DNA unwinding and targets Pol II core to the transcription start site where the first phosphodiester bond forms. Post-translationally, the alpha and beta subunits are postranslationally produced from the precursor formby TASP1. The cleavage promotes proteasomal degradation.

Its subcellular location is the nucleus. Functionally, TFIIA is a component of the transcription machinery of RNA polymerase II and plays an important role in transcriptional activation. TFIIA in a complex with TBP mediates transcriptional activity. The polypeptide is Transcription initiation factor IIA subunit 1 (GTF2A1) (Pongo abelii (Sumatran orangutan)).